Reading from the N-terminus, the 357-residue chain is Heat-inducible transcription repressor HrcA (357 aa).

The protein belongs to the HrcA family.

In terms of biological role, negative regulator of class I heat shock genes (grpE-dnaK-dnaJ and groELS operons). Prevents heat-shock induction of these operons. This Chlorobium phaeovibrioides (strain DSM 265 / 1930) (Prosthecochloris vibrioformis (strain DSM 265)) protein is Heat-inducible transcription repressor HrcA.